Reading from the N-terminus, the 279-residue chain is Cytochrome c1 (279 aa).

A signal peptide spans 1–21; the sequence is MKKLLISAVSALVLGSGAAFA. Cys55, Cys58, His59, and Met204 together coordinate heme c. A helical membrane pass occupies residues 248 to 266; the sequence is MGLVAMVMLGLLSVMLYLT.

The main subunits of complex b-c1 are: cytochrome b, cytochrome c1 and the Rieske protein. Binds 1 heme c group covalently per subunit.

It localises to the cell membrane. Component of the ubiquinol-cytochrome c reductase complex (complex III or cytochrome b-c1 complex), which is a respiratory chain that generates an electrochemical potential coupled to ATP synthesis. c1 functions as an electron donor to cytochrome c. The sequence is that of Cytochrome c1 (petC) from Rhodobacter capsulatus (strain ATCC BAA-309 / NBRC 16581 / SB1003).